The following is a 383-amino-acid chain: GA-binding protein subunit beta-1 (383 aa).

At serine 2 the chain carries N-acetylserine. ANK repeat units follow at residues 5–34 (DLGK…PFTT) and 37–66 (LGTS…SRDA). Lysine 69 carries the N6-acetyllysine modification. ANK repeat units lie at residues 70-99 (VDRT…DVNA), 103-132 (LKMT…DVHT), and 136-166 (FCKT…QINT). 2 positions are modified to N6-acetyllysine: lysine 340 and lysine 369.

As to quaternary structure, heterotetramer of two alpha and two beta subunits. Interacts with HCFC1, causing repression of transcriptional activity. Post-translationally, acetylated by EP300/p300. Deacetylated by SIRT7, promoting heterotetramerization and activity.

The protein resides in the nucleus. Transcription factor capable of interacting with purine rich repeats (GA repeats). Acts as a master regulator of nuclear-encoded mitochondrial genes. The polypeptide is GA-binding protein subunit beta-1 (GABPB1) (Bos taurus (Bovine)).